The chain runs to 310 residues: Fructose-bisphosphate aldolase/6-deoxy-5-ketofructose 1-phosphate synthase (310 aa).

Residues 48-49 (DQ), H53, D57, and W180 each bind substrate. The active-site Proton donor is Y182. Residues R184, 213–215 (KVN), 241–243 (AGG), and 270–271 (GR) contribute to the substrate site. Catalysis depends on K213, which acts as the Schiff-base intermediate with dihydroxyacetone-P. K213 serves as the catalytic Schiff-base intermediate with substrate.

This sequence belongs to the DeoC/FbaB aldolase family.

The catalysed reaction is beta-D-fructose 1,6-bisphosphate = D-glyceraldehyde 3-phosphate + dihydroxyacetone phosphate. It carries out the reaction beta-D-fructose 1,6-bisphosphate + methylglyoxal = 1-deoxy-D-threo-hexo-2,5-diulose 6-phosphate + D-glyceraldehyde 3-phosphate. It catalyses the reaction beta-D-fructose 1-phosphate + methylglyoxal = 1-deoxy-D-threo-hexo-2,5-diulose 6-phosphate + D-glyceraldehyde. The protein operates within aromatic compound metabolism. Catalyzes the transaldolization of either fructose-1-P or fructose-1,6-bisphosphate with methylglyoxal to produce 6-deoxy-5-ketofructose-1-phosphate (DKFP). Also catalyzes the reversible aldol condensation of dihydroxyacetone phosphate (DHAP or glycerone-phosphate) with glyceraldehyde 3-phosphate (G3P or GAP) to produce fructose 1,6-bisphosphate (FBP). The polypeptide is Fructose-bisphosphate aldolase/6-deoxy-5-ketofructose 1-phosphate synthase (Methanocaldococcus jannaschii (strain ATCC 43067 / DSM 2661 / JAL-1 / JCM 10045 / NBRC 100440) (Methanococcus jannaschii)).